Consider the following 278-residue polypeptide: Inositol oxygenase (278 aa).

Residues Arg22 and 78–80 (DES) each bind substrate. The Fe cation site is built by His91, His116, and Asp117. Substrate is bound by residues Lys120 and 134-135 (GD). Residues His187, His213, and Asp246 each contribute to the Fe cation site. 213-214 (HS) is a substrate binding site.

This sequence belongs to the myo-inositol oxygenase family. It depends on Fe cation as a cofactor.

Its subcellular location is the cytoplasm. It carries out the reaction myo-inositol + O2 = D-glucuronate + H2O + H(+). The protein operates within polyol metabolism; myo-inositol degradation into D-glucuronate; D-glucuronate from myo-inositol: step 1/1. The polypeptide is Inositol oxygenase (miox) (Danio rerio (Zebrafish)).